The chain runs to 545 residues: Ribulokinase (545 aa).

It belongs to the ribulokinase family.

The catalysed reaction is D-ribulose + ATP = D-ribulose 5-phosphate + ADP + H(+). It carries out the reaction L-ribulose + ATP = L-ribulose 5-phosphate + ADP + H(+). It participates in carbohydrate degradation; L-arabinose degradation via L-ribulose; D-xylulose 5-phosphate from L-arabinose (bacterial route): step 2/3. This chain is Ribulokinase, found in Staphylococcus aureus (strain bovine RF122 / ET3-1).